The sequence spans 100 residues: Large ribosomal subunit protein uL23 (100 aa).

This sequence belongs to the universal ribosomal protein uL23 family. Part of the 50S ribosomal subunit. Contacts protein L29, and trigger factor when it is bound to the ribosome.

Its function is as follows. One of the early assembly proteins it binds 23S rRNA. One of the proteins that surrounds the polypeptide exit tunnel on the outside of the ribosome. Forms the main docking site for trigger factor binding to the ribosome. The chain is Large ribosomal subunit protein uL23 from Mycolicibacterium vanbaalenii (strain DSM 7251 / JCM 13017 / BCRC 16820 / KCTC 9966 / NRRL B-24157 / PYR-1) (Mycobacterium vanbaalenii).